The chain runs to 268 residues: Deoxyuridine 5'-triphosphate nucleotidohydrolase (268 aa).

Residues 172 to 174 and 263 to 264 each bind substrate; these read RSS and FG.

Belongs to the dUTPase family. Mg(2+) is required as a cofactor.

It carries out the reaction dUTP + H2O = dUMP + diphosphate + H(+). Its function is as follows. Involved in nucleotide metabolism: produces dUMP, the immediate precursor of thymidine nucleotides and decreases the intracellular concentration of dUTP to avoid uracil incorporation into viral DNA. The chain is Deoxyuridine 5'-triphosphate nucleotidohydrolase from Suid herpesvirus 1 (strain Kaplan) (SuHV-1).